An 83-amino-acid chain; its full sequence is MSGSTGERSFADIITSIRYWVIHSITIPSLFIAGWLFVSTGLAYDVFGSPRPNEYFTESRQGIPLITGRFDSLEQLDKFSNPF.

The chain crosses the membrane as a helical span at residues 21 to 35 (VIHSITIPSLFIAGW). His23 contacts heme.

This sequence belongs to the PsbE/PsbF family. As to quaternary structure, heterodimer of an alpha subunit and a beta subunit. PSII is composed of 1 copy each of membrane proteins PsbA, PsbB, PsbC, PsbD, PsbE, PsbF, PsbH, PsbI, PsbJ, PsbK, PsbL, PsbM, PsbT, PsbX, PsbY, PsbZ, Psb30/Ycf12, at least 3 peripheral proteins of the oxygen-evolving complex and a large number of cofactors. It forms dimeric complexes. Heme b serves as cofactor.

The protein resides in the plastid. It localises to the chloroplast thylakoid membrane. Its function is as follows. This b-type cytochrome is tightly associated with the reaction center of photosystem II (PSII). PSII is a light-driven water:plastoquinone oxidoreductase that uses light energy to abstract electrons from H(2)O, generating O(2) and a proton gradient subsequently used for ATP formation. It consists of a core antenna complex that captures photons, and an electron transfer chain that converts photonic excitation into a charge separation. In Phalaenopsis aphrodite subsp. formosana (Moth orchid), this protein is Cytochrome b559 subunit alpha.